We begin with the raw amino-acid sequence, 1771 residues long: Fatty acid synthase alpha subunit pkiB (1771 aa).

The span at 108–130 (SQPTQPQFEPTSPSHLTKRSPSP) shows a compositional bias: polar residues. The tract at residues 108–133 (SQPTQPQFEPTSPSHLTKRSPSPSKA) is disordered. Residues 143-221 (ELTLQAGHVI…ESFQPEFSGI (79 aa)) enclose the Carrier domain. Serine 181 is modified (O-(pantetheine 4'-phosphoryl)serine). Residues 575-771 (HKAVLVTGAG…CGAVIGWTRG (197 aa)) are beta-ketoacyl reductase. The Ketosynthase family 3 (KS3) domain occupies 1011–1531 (KELLHEVAVE…QKGAINIMVS (521 aa)). Active-site for beta-ketoacyl synthase activity residues include cysteine 1197, histidine 1416, and histidine 1457. Residues aspartate 1650, valine 1651, and glutamate 1652 each contribute to the Mg(2+) site. Acetyl-CoA is bound by residues 1650-1652 (DVE), tyrosine 1676, serine 1686, 1695-1705 (EAAFKSLQTTS), 1719-1722 (EVGG), and 1753-1755 (ISH). Mg(2+)-binding residues include serine 1754 and histidine 1755.

Belongs to the thiolase-like superfamily. Fungal fatty acid synthetase subunit alpha family. [Alpha(6)beta(6)] hexamers of two multifunctional subunits (alpha and beta).

The catalysed reaction is acetyl-CoA + n malonyl-CoA + 2n NADPH + 4n H(+) = a long-chain-acyl-CoA + n CoA + n CO2 + 2n NADP(+).. The enzyme catalyses a fatty acyl-[ACP] + malonyl-[ACP] + H(+) = a 3-oxoacyl-[ACP] + holo-[ACP] + CO2. It catalyses the reaction a (3R)-hydroxyacyl-[ACP] + NADP(+) = a 3-oxoacyl-[ACP] + NADPH + H(+). Its pathway is secondary metabolite biosynthesis. Fatty acid synthase alpha subunit; part of the pki gene cluster that mediates the biosynthesis of 2,4-dihydroxy-3-methyl-6-(2-oxoundecyl)benzaldehyde. The first step in the pathway is the generation of the decanoyl starter unit by the FAS composed of subunits pkiB and pkiC, which is then transferred directly from the FAS to the SAT domain of the non-reducing polyketide synthase pkiA. PkiA condenses the decanoyyl starter unit with 4 malonyl-CoA units and performs one methylation step to yield 2,4-dihydroxy-3-methyl-6-(2-oxoundecyl)benzaldehyde. The polypeptide is Fatty acid synthase alpha subunit pkiB (Emericella nidulans (strain FGSC A4 / ATCC 38163 / CBS 112.46 / NRRL 194 / M139) (Aspergillus nidulans)).